Here is a 390-residue protein sequence, read N- to C-terminus: Elongation factor Tu 2 (390 aa).

One can recognise a tr-type G domain in the interval 10–201 (KPHVNVGTIG…LDDYVEVPPR (192 aa)). The tract at residues 19 to 26 (GHVDHGKT) is G1. 19 to 26 (GHVDHGKT) is a binding site for GTP. Mg(2+) is bound at residue Thr26. Residues 55 to 59 (GITIA) form a G2 region. Positions 76 to 79 (DCPG) are G3. GTP is bound by residues 76 to 80 (DCPGH) and 131 to 134 (NKAD). Positions 131–134 (NKAD) are G4. A G5 region spans residues 168–170 (SAL).

It belongs to the TRAFAC class translation factor GTPase superfamily. Classic translation factor GTPase family. EF-Tu/EF-1A subfamily. As to quaternary structure, monomer.

It localises to the cytoplasm. The enzyme catalyses GTP + H2O = GDP + phosphate + H(+). GTP hydrolase that promotes the GTP-dependent binding of aminoacyl-tRNA to the A-site of ribosomes during protein biosynthesis. This is Elongation factor Tu 2 from Wolbachia sp. subsp. Brugia malayi (strain TRS).